Reading from the N-terminus, the 288-residue chain is Acetylglutamate kinase (288 aa).

Residues 73 to 74 (GG), Arg-95, and Asn-186 each bind substrate.

Belongs to the acetylglutamate kinase family. ArgB subfamily.

The protein localises to the cytoplasm. It carries out the reaction N-acetyl-L-glutamate + ATP = N-acetyl-L-glutamyl 5-phosphate + ADP. It functions in the pathway amino-acid biosynthesis; L-arginine biosynthesis; N(2)-acetyl-L-ornithine from L-glutamate: step 2/4. In terms of biological role, catalyzes the ATP-dependent phosphorylation of N-acetyl-L-glutamate. The polypeptide is Acetylglutamate kinase (Pelagibacter ubique (strain HTCC1062)).